A 250-amino-acid polypeptide reads, in one-letter code: Vacuolar protein sorting-associated protein 22 homolog 1 (250 aa).

A coiled-coil region spans residues 35 to 55; it reads MKEQLSTFRSQLEEFARKHKN.

It belongs to the SNF8 family. In terms of assembly, component of the endosomal sorting complex required for transport II (ESCRT-II), composed of VPS22, VPS25 and VPS36.

It localises to the endosome. Its function is as follows. Component of the endosomal sorting complex required for transport II (ESCRT-II), which is required for multivesicular body (MVB) formation and sorting of endosomal cargo proteins into MVBs. The ESCRT-II complex is probably involved in the recruitment of the ESCRT-III complex. The chain is Vacuolar protein sorting-associated protein 22 homolog 1 (VP22-1) from Arabidopsis thaliana (Mouse-ear cress).